The chain runs to 471 residues: Ribosomal protein uS12 methylthiotransferase RimO (471 aa).

Positions 2–122 (IKVSLISLGC…VAPIIQEIYA (121 aa)) constitute an MTTase N-terminal domain. 6 residues coordinate [4Fe-4S] cluster: C11, C47, C84, C166, C170, and C173. Positions 152–395 (LTPKHFAYVK…MALQKQIAAD (244 aa)) constitute a Radical SAM core domain. A TRAM domain is found at 398–458 (KTYVGRTLRV…DYDLLALPPG (61 aa)).

Belongs to the methylthiotransferase family. RimO subfamily. The cofactor is [4Fe-4S] cluster.

It localises to the cytoplasm. It carries out the reaction L-aspartate(89)-[ribosomal protein uS12]-hydrogen + (sulfur carrier)-SH + AH2 + 2 S-adenosyl-L-methionine = 3-methylsulfanyl-L-aspartate(89)-[ribosomal protein uS12]-hydrogen + (sulfur carrier)-H + 5'-deoxyadenosine + L-methionine + A + S-adenosyl-L-homocysteine + 2 H(+). Its function is as follows. Catalyzes the methylthiolation of an aspartic acid residue of ribosomal protein uS12. This is Ribosomal protein uS12 methylthiotransferase RimO from Opitutus terrae (strain DSM 11246 / JCM 15787 / PB90-1).